A 178-amino-acid polypeptide reads, in one-letter code: Ribosome maturation factor RimM (178 aa).

In terms of domain architecture, PRC barrel spans Glu-101–Phe-178.

The protein belongs to the RimM family. In terms of assembly, binds ribosomal protein uS19.

It is found in the cytoplasm. An accessory protein needed during the final step in the assembly of 30S ribosomal subunit, possibly for assembly of the head region. Essential for efficient processing of 16S rRNA. May be needed both before and after RbfA during the maturation of 16S rRNA. It has affinity for free ribosomal 30S subunits but not for 70S ribosomes. The protein is Ribosome maturation factor RimM of Ectopseudomonas mendocina (strain ymp) (Pseudomonas mendocina).